Consider the following 374-residue polypeptide: Pulmonary surfactant-associated protein D (374 aa).

The signal sequence occupies residues 1-19; that stretch reads MLPFLSMLVLLVQPLGNLG. S-nitrosocysteine occurs at positions 34 and 39. The segment at 38-222 is disordered; that stretch reads MCSPTENGLP…GIKGESGLPD (185 aa). A Collagen-like domain is found at 45 to 221; that stretch reads GLPGRDGRDG…RGIKGESGLP (177 aa). The span at 49 to 64 shows a compositional bias: basic and acidic residues; that stretch reads RDGRDGREGPRGEKGD. Positions 70 to 79 are enriched in low complexity; it reads PMGLSGLQGP. A glycan (N-linked (GlcNAc...) asparagine) is linked at N89. 2 stretches are compositionally biased toward low complexity: residues 137 to 149 and 169 to 200; these read KGEA…VGAP and APGV…RGPP. Residues 203-215 show a composition bias toward basic and acidic residues; the sequence is KGDRGVPGDRGIK. Residues 222 to 253 adopt a coiled-coil conformation; the sequence is DSAALRQQMEALKGKLQRLEVAFSHYQKAALF. A C-type lectin domain is found at 259–374; the sequence is VGDKIFRTAD…GEQRLVICEF (116 aa). Intrachain disulfides connect C280–C372 and C350–C364.

It belongs to the SFTPD family. In terms of assembly, oligomeric complex of 4 set of homotrimers. In terms of processing, S-nitrosylation at Cys-34 and Cys-39 alters the quaternary structure which results in a pro-inflammatory chemoattractive signaling activity with macrophages.

It localises to the secreted. The protein resides in the extracellular space. It is found in the extracellular matrix. Its subcellular location is the surface film. Its function is as follows. Contributes to the lung's defense against inhaled microorganisms, organic antigens and toxins. Interacts with compounds such as bacterial lipopolysaccharides, oligosaccharides and fatty acids and modulates leukocyte action in immune response. May participate in the extracellular reorganization or turnover of pulmonary surfactant. Binds strongly maltose residues and to a lesser extent other alpha-glucosyl moieties. This is Pulmonary surfactant-associated protein D (Sftpd) from Mus musculus (Mouse).